A 157-amino-acid chain; its full sequence is Protein Smg (157 aa).

This sequence belongs to the Smg family.

The sequence is that of Protein Smg from Escherichia coli O6:H1 (strain CFT073 / ATCC 700928 / UPEC).